Consider the following 821-residue polypeptide: MVSWGRFICLVVVTMATLSLARPSFSLVEDTTLEPEEPPTKYQISQPEVYVAAPGESLEVRCLLKDAAVISWTKDGVHLGPNNRTVLIGEYLQIKGATPRDSGLYACTASRTVDSETWYFMVNVTDAISSGDDEDDTDGAEDFVSENSNNKRAPYWTNTEKMEKRLHAVPAANTVKFRCPAGGNPMPTMRWLKNGKEFKQEHRIGGYKVRNQHWSLIMESVVPSDKGNYTCVVENEYGSINHTYHLDVVERSPHRPILQAGLPANASTVVGGDVEFVCKVYSDAQPHIQWIKHVEKNGSKYGPDGLPYLKVLKAAGVNTTDKEIEVLYIRNVTFEDAGEYTCLAGNSIGISFHSAWLTVLPAPGREKEITASPDYLEIAIYCIGVFLIACMVVTVILCRMKNTTKKPDFSSQPAVHKLTKRIPLRRQVTVSAESSSSMNSNTPLVRITTRLSSTADTPMLAGVSEYELPEDPKWEFPRDKLTLGKPLGEGCFGQVVMAEAVGIDKDKPKEAVTVAVKMLKDDATEKDLSDLVSEMEMMKMIGKHKNIINLLGACTQDGPLYVIVEYASKGNLREYLRARRPPGMEYSYDINRVPEEQMTFKDLVSCTYQLARGMEYLASQKCIHRDLAARNVLVTENNVMKIADFGLARDINNIDYYKKTTNGRLPVKWMAPEALFDRVYTHQSDVWSFGVLMWEIFTLGGSPYPGIPVEELFKLLKEGHRMDKPANCTNELYMMMRDCWHAVPSQRPTFKQLVEDLDRILTLTTNEEYLDLSQPLEQYSPSYPDTRSSCSSGDDSVFSPDPMPYEPCLPQYPHINGSVKT.

The signal sequence occupies residues 1 to 21 (MVSWGRFICLVVVTMATLSLA). Topologically, residues 22–377 (RPSFSLVEDT…EITASPDYLE (356 aa)) are extracellular. An Ig-like C2-type 1 domain is found at 25 to 125 (FSLVEDTTLE…ETWYFMVNVT (101 aa)). Cys62 and Cys107 form a disulfide bridge. N-linked (GlcNAc...) asparagine glycans are attached at residues Asn83 and Asn123. The segment covering 131–144 (GDDEDDTDGAEDFV) has biased composition (acidic residues). A disordered region spans residues 131-151 (GDDEDDTDGAEDFVSENSNNK). Ig-like C2-type domains are found at residues 154 to 247 (PYWT…YHLD) and 256 to 358 (PILQ…AWLT). The tract at residues 161–178 (KMEKRLHAVPAANTVKFR) is heparin-binding. Cys179 and Cys231 are disulfide-bonded. N-linked (GlcNAc...) asparagine glycans are attached at residues Asn228, Asn241, Asn265, Asn297, Asn318, and Asn331. Cys278 and Cys342 are disulfide-bonded. Residues 378-398 (IAIYCIGVFLIACMVVTVILC) traverse the membrane as a helical segment. Over 399-821 (RMKNTTKKPD…YPHINGSVKT (423 aa)) the chain is Cytoplasmic. Tyr466 carries the post-translational modification Phosphotyrosine; by autocatalysis. The Protein kinase domain maps to 481 to 770 (LTLGKPLGEG…LTLTTNEEYL (290 aa)). ATP is bound by residues 487–495 (LGEGCFGQV), Lys517, 565–567 (EYA), and Asn571. Phosphotyrosine; by autocatalysis is present on residues Tyr586 and Tyr588. Asp626 functions as the Proton acceptor in the catalytic mechanism. Residues Tyr656, Tyr657, and Tyr769 each carry the phosphotyrosine; by autocatalysis modification. Residue Ser780 is modified to Phosphoserine.

This sequence belongs to the protein kinase superfamily. Tyr protein kinase family. Fibroblast growth factor receptor subfamily. In terms of assembly, monomer. Homodimer after ligand binding. Interacts predominantly with FGF1 and FGF2, but can also interact with FGF3, FGF4, FGF6, FGF7, FGF8, FGF9, FGF10, FGF17, FGF18 and FGF22 (in vitro). Ligand specificity is determined by tissue-specific expression of isoforms, and differences in the third Ig-like domain are crucial for ligand specificity. Isoform 1 has high affinity for FGF1 and FGF2, but low affinity for FGF7. Isoform 3 has high affinity for FGF1 and FGF7, and has much higher affinity for FGF7 than isoform 1 (in vitro). Affinity for fibroblast growth factors (FGFs) is increased by heparan sulfate glycosaminoglycans that function as coreceptors. Likewise, KLB increases the affinity for FGF19 and FGF21. Interacts with PLCG1, GRB2 and PAK4. Interacts with FLRT2. Post-translationally, autophosphorylated. Binding of FGF family members together with heparan sulfate proteoglycan or heparin promotes receptor dimerization and autophosphorylation on several tyrosine residues. Autophosphorylation occurs in trans between the two FGFR molecules present in the dimer. Phosphorylation at Tyr-769 is essential for interaction with PLCG1. In terms of processing, N-glycosylated in the endoplasmic reticulum. The N-glycan chains undergo further maturation to an Endo H-resistant form in the Golgi apparatus. Ubiquitinated. FGFR2 is rapidly ubiquitinated after autophosphorylation, leading to internalization and degradation. Subject to degradation both in lysosomes and by the proteasome.

The protein localises to the cell membrane. The protein resides in the golgi apparatus. Its subcellular location is the cytoplasmic vesicle. It localises to the secreted. The catalysed reaction is L-tyrosyl-[protein] + ATP = O-phospho-L-tyrosyl-[protein] + ADP + H(+). Present in an inactive conformation in the absence of bound ligand. Ligand binding leads to dimerization and activation by autophosphorylation on tyrosine residues. Inhibited by ARQ 523 and ARQ 069; these compounds maintain the kinase in an inactive conformation and inhibit autophosphorylation. In terms of biological role, tyrosine-protein kinase that acts as a cell-surface receptor for fibroblast growth factors and plays an essential role in the regulation of cell proliferation, differentiation, migration and apoptosis, and in the regulation of embryonic development. Required for normal embryonic patterning, trophoblast function, limb bud development, lung morphogenesis, osteogenesis and skin development. Plays an essential role in the regulation of osteoblast differentiation, proliferation and apoptosis, and is required for normal skeleton development. Promotes cell proliferation in keratinocytes and immature osteoblasts, but promotes apoptosis in differentiated osteoblasts. Phosphorylates PLCG1, FRS2 and PAK4. Ligand binding leads to the activation of several signaling cascades. Activation of PLCG1 leads to the production of the cellular signaling molecules diacylglycerol and inositol 1,4,5-trisphosphate. Phosphorylation of FRS2 triggers recruitment of GRB2, GAB1, PIK3R1 and SOS1, and mediates activation of RAS, MAPK1/ERK2, MAPK3/ERK1 and the MAP kinase signaling pathway, as well as of the AKT1 signaling pathway. FGFR2 signaling is down-regulated by ubiquitination, internalization and degradation. Mutations that lead to constitutive kinase activation or impair normal FGFR2 maturation, internalization and degradation lead to aberrant signaling. Over-expressed FGFR2 promotes activation of STAT1. This Homo sapiens (Human) protein is Fibroblast growth factor receptor 2 (FGFR2).